Reading from the N-terminus, the 60-residue chain is Large ribosomal subunit protein bL32 (60 aa).

The protein belongs to the bacterial ribosomal protein bL32 family.

In Ehrlichia ruminantium (strain Gardel), this protein is Large ribosomal subunit protein bL32.